A 191-amino-acid polypeptide reads, in one-letter code: LHFPL tetraspan subfamily member 7 protein (191 aa).

The next 4 helical transmembrane spans lie at 6 to 26 (MGSL…FSLM), 72 to 92 (IAAV…VLVL), 112 to 132 (YAQI…PFNL), and 154 to 174 (LGWG…LPFI).

It belongs to the TMEM211 family.

It localises to the membrane. This Xenopus tropicalis (Western clawed frog) protein is LHFPL tetraspan subfamily member 7 protein (lhfpl7).